The chain runs to 248 residues: Conoporin-Cn1 (248 aa).

The signal sequence occupies residues 1–23 (MGVQFPALKTMVTVFLLLMGNMS). Residues 45–64 (TPGSSLYGVALKDLADTSYN) form an N-terminal region region. Phosphocholine-binding residues include G120, S138, P140, Y167, and Y171.

Belongs to the actinoporin family. Conoidea subfamily. In terms of assembly, octamer or nonamer in membranes. Monomer in the soluble state. In terms of processing, 9 isoforms are detected in the injectable venom, mainly corresponding to different oxidative states. In terms of tissue distribution, expressed by the venom duct.

It is found in the secreted. The protein localises to the nematocyst. Its subcellular location is the target cell membrane. In terms of biological role, pore-forming protein that forms pores of around 1 nm and causes cardiac stimulation and cytolysis. The chain is Conoporin-Cn1 from Conus consors (Singed cone).